A 271-amino-acid chain; its full sequence is Ribosomal RNA small subunit methyltransferase A (271 aa).

5 residues coordinate S-adenosyl-L-methionine: leucine 20, glycine 45, glutamate 66, aspartate 90, and asparagine 112.

It belongs to the class I-like SAM-binding methyltransferase superfamily. rRNA adenine N(6)-methyltransferase family. RsmA subfamily.

The protein resides in the cytoplasm. The enzyme catalyses adenosine(1518)/adenosine(1519) in 16S rRNA + 4 S-adenosyl-L-methionine = N(6)-dimethyladenosine(1518)/N(6)-dimethyladenosine(1519) in 16S rRNA + 4 S-adenosyl-L-homocysteine + 4 H(+). In terms of biological role, specifically dimethylates two adjacent adenosines (A1518 and A1519) in the loop of a conserved hairpin near the 3'-end of 16S rRNA in the 30S particle. May play a critical role in biogenesis of 30S subunits. This chain is Ribosomal RNA small subunit methyltransferase A, found in Blochmanniella floridana.